The primary structure comprises 851 residues: DNA mismatch repair protein MutS (851 aa).

602 to 609 (GPNMSGKS) is a binding site for ATP.

This sequence belongs to the DNA mismatch repair MutS family.

In terms of biological role, this protein is involved in the repair of mismatches in DNA. It is possible that it carries out the mismatch recognition step. This protein has a weak ATPase activity. This chain is DNA mismatch repair protein MutS, found in Streptococcus equi subsp. equi (strain 4047).